Reading from the N-terminus, the 152-residue chain is Deoxyuridine 5'-triphosphate nucleotidohydrolase (152 aa).

Substrate contacts are provided by residues 71–73 (RSG), Asn84, 88–90 (LID), and Met98.

This sequence belongs to the dUTPase family. Homotrimer. Requires Mg(2+) as cofactor.

It catalyses the reaction dUTP + H2O = dUMP + diphosphate + H(+). The protein operates within pyrimidine metabolism; dUMP biosynthesis; dUMP from dCTP (dUTP route): step 2/2. In terms of biological role, this enzyme is involved in nucleotide metabolism: it produces dUMP, the immediate precursor of thymidine nucleotides and it decreases the intracellular concentration of dUTP so that uracil cannot be incorporated into DNA. In Escherichia coli O157:H7, this protein is Deoxyuridine 5'-triphosphate nucleotidohydrolase.